The primary structure comprises 286 residues: MTAQNIDGTLISQTVRSEVAARVKARVQAGLRAPGLAVVLVGEDPASQVYVGSKRRACEEVGFVSKSFDLPATASEEALLSLVEELNNDPQIDGILVQLPLPAGMDTTKVLESIHPEKDVDGFHPYNVGRLAQRIPKLRSCTPKGIITLLERYNIPLRGKHAVIVGASNIVGRPMTLELLLAGCTTTTCHRFTQDLEGHIRQADILVVAVGKPNFIPGAWIKEGAVVVDVGINRLDTGKLVGDVEYDVARTRASFITPVPGGVGPMTVASLIENTMMACEQFHTQG.

NADP(+)-binding positions include 166–168 and Ile232; that span reads GAS.

It belongs to the tetrahydrofolate dehydrogenase/cyclohydrolase family. As to quaternary structure, homodimer.

It catalyses the reaction (6R)-5,10-methylene-5,6,7,8-tetrahydrofolate + NADP(+) = (6R)-5,10-methenyltetrahydrofolate + NADPH. The enzyme catalyses (6R)-5,10-methenyltetrahydrofolate + H2O = (6R)-10-formyltetrahydrofolate + H(+). Its pathway is one-carbon metabolism; tetrahydrofolate interconversion. In terms of biological role, catalyzes the oxidation of 5,10-methylenetetrahydrofolate to 5,10-methenyltetrahydrofolate and then the hydrolysis of 5,10-methenyltetrahydrofolate to 10-formyltetrahydrofolate. The polypeptide is Bifunctional protein FolD (Vibrio cholerae serotype O1 (strain ATCC 39541 / Classical Ogawa 395 / O395)).